A 639-amino-acid chain; its full sequence is MALWTSSYPVDTGDRDPSFAWPDTDVPSAGLDESQHDLFAQFLDFEAGHGSTSSATVAVAEPFYMDPSHHHHHPHHHAHGESSTTSSGVSNADEFDFLSSSSNPGAAGYDVDPSTLAMFAQDPAAMYSTTSGVTVSDTELERLEGISLHSPKKGDGTFADRAASPTPVAAPAIAVNATTNAANTTTNARRSKKIVDALSSTFRKATTMRKTRKVSQTLQRAVSPSMENPPMAIKPGSAQSAAPVPRGRRAHRAHTQHALQHQQQQHQHQQQQAHQISESPPILQINTGLANSGGFVAGQFEDPFGGEISPTHAPQPQSQPPQMRYYSQGGLGTPLDSPTRSAAMLQQQWQQQQQQQHNGAQQHQWSAASSQQELWWGGAAGGGAIEAKNIDANMAMHSQHGELPYDVHADAGRVAPNGLLIHMPQPRPGSSSVHDLSLNAHTYLPPPPPVPTENTRSARPPRAPSSGARHHHRTTSSSPMRKQRGTSVSPSPGGNGSGGGTRQSRHSSGGSAASSSQRSASGRVSVPGTPSSSGIKKRRSRDAGSGSFSADEAGGFTLVGGGGGGGGGGGGGGIGFVNFTPNDGGVLMTGVAPSGSSKTKARREKEAQERRRRLSEAAMKAVAAAGGDIRKLREQGFEL.

Disordered stretches follow at residues 65–97 (MDPSHHHHHPHHHAHGESSTTSSGVSNADEFDF), 206–369 (TTMR…SAAS), 418–552 (GLLI…SADE), and 587–613 (LMTGVAPSGSSKTKARREKEAQERRRR). The segment covering 69–78 (HHHHHPHHHA) has biased composition (basic residues). Polar residues-rich tracts occupy residues 81-90 (ESSTTSSGVS) and 214-226 (VSQTLQRAVSPSM). Residues 246 to 255 (RGRRAHRAHT) show a composition bias toward basic residues. 3 stretches are compositionally biased toward low complexity: residues 256 to 275 (QHALQHQQQQHQHQQQQAHQ), 346 to 369 (QQQWQQQQQQQHNGAQQHQWSAAS), and 506 to 526 (HSSGGSAASSSQRSASGRVSV).

The protein belongs to the wetA family.

Functionally, brlA, abaA and wetA are pivotal regulators of conidiophore development and conidium maturation. They act individually and together to regulate their own expression and that of numerous other sporulation-specific genes. Acts as a crucial regulator of both conidiation capacity and conidial quality. Plays a role in virulence. The sequence is that of Developmental regulatory protein wetA from Beauveria bassiana (strain ARSEF 2860) (White muscardine disease fungus).